Consider the following 232-residue polypeptide: tRNA (guanine-N(1)-)-methyltransferase (232 aa).

Residues Gly111 and 131–136 (IGDYIL) each bind S-adenosyl-L-methionine.

It belongs to the RNA methyltransferase TrmD family. Homodimer.

Its subcellular location is the cytoplasm. The enzyme catalyses guanosine(37) in tRNA + S-adenosyl-L-methionine = N(1)-methylguanosine(37) in tRNA + S-adenosyl-L-homocysteine + H(+). Its function is as follows. Specifically methylates guanosine-37 in various tRNAs. In Bartonella quintana (strain Toulouse) (Rochalimaea quintana), this protein is tRNA (guanine-N(1)-)-methyltransferase.